Reading from the N-terminus, the 423-residue chain is Mannitol-1-phosphate 5-dehydrogenase (423 aa).

Zn(2+) is bound by residues Cys-40, His-69, and Glu-70.

It belongs to the zinc-containing alcohol dehydrogenase family. Requires Zn(2+) as cofactor.

It catalyses the reaction D-mannitol 1-phosphate + NAD(+) = beta-D-fructose 6-phosphate + NADH + H(+). Seems to be involved in mannitol utilization. Complements an E.coli mtlD deletion mutant. The sequence is that of Mannitol-1-phosphate 5-dehydrogenase from Aliivibrio fischeri (strain ATCC 700601 / ES114) (Vibrio fischeri).